Consider the following 300-residue polypeptide: UPF0282 protein TON_1363 (300 aa).

It belongs to the UPF0282 family.

This chain is UPF0282 protein TON_1363, found in Thermococcus onnurineus (strain NA1).